The primary structure comprises 330 residues: Methionyl-tRNA formyltransferase (330 aa).

112–115 (SLLP) lines the (6S)-5,6,7,8-tetrahydrofolate pocket.

The protein belongs to the Fmt family.

It catalyses the reaction L-methionyl-tRNA(fMet) + (6R)-10-formyltetrahydrofolate = N-formyl-L-methionyl-tRNA(fMet) + (6S)-5,6,7,8-tetrahydrofolate + H(+). Attaches a formyl group to the free amino group of methionyl-tRNA(fMet). The formyl group appears to play a dual role in the initiator identity of N-formylmethionyl-tRNA by promoting its recognition by IF2 and preventing the misappropriation of this tRNA by the elongation apparatus. The polypeptide is Methionyl-tRNA formyltransferase (Synechococcus sp. (strain RCC307)).